We begin with the raw amino-acid sequence, 467 residues long: Sexual differentiation process putative subtilase-type proteinase isp6 (467 aa).

Residues 86 to 176 (YIIVLQPDLS…AVERDQVVSI (91 aa)) enclose the Inhibitor I9 domain. One can recognise a Peptidase S8 domain in the interval 186–467 (PWGLARISHK…NLLAFNGAQE (282 aa)). Active-site charge relay system residues include aspartate 221, histidine 253, and serine 409.

This sequence belongs to the peptidase S8 family.

This is Sexual differentiation process putative subtilase-type proteinase isp6 (isp6) from Schizosaccharomyces pombe (strain 972 / ATCC 24843) (Fission yeast).